Here is a 95-residue protein sequence, read N- to C-terminus: MSTHNNSPKEKPVDMNNISEKLDVVNNAPEKPAGANHIPEKSAEMTSSEWIAEYWKGINRGNDVPCCCPRKMTSVDKKFSVFGKGYLMRSMQKDD.

This sequence belongs to the asfivirus DP96R family.

This is an uncharacterized protein from African swine fever virus (isolate Warthog/Namibia/Wart80/1980) (ASFV).